Consider the following 363-residue polypeptide: Cytochrome b (363 aa).

4 helical membrane-spanning segments follow: residues 23–43 (VGFI…LLTF), 67–89 (WFVR…IHII), 102–122 (SWYS…TGYV), and 164–184 (FFIL…LHLY). Residues His73 and His87 each coordinate heme b. His168 and His182 together coordinate heme b. A ubiquinone is bound at residue His187. 4 consecutive transmembrane segments (helical) span residues 210–230 (ILFS…PQVG), 271–291 (VFPT…LLII), 309–329 (RVWT…GCIG), and 332–352 (VINL…TTFV).

The protein belongs to the cytochrome b family. The main subunits of complex b-c1 are: cytochrome b, cytochrome c1 and the Rieske protein. The cofactor is heme b.

The protein resides in the mitochondrion inner membrane. Component of the ubiquinol-cytochrome c reductase complex (complex III or cytochrome b-c1 complex) that is part of the mitochondrial respiratory chain. The b-c1 complex mediates electron transfer from ubiquinol to cytochrome c. Contributes to the generation of a proton gradient across the mitochondrial membrane that is then used for ATP synthesis. This Theileria parva (East coast fever infection agent) protein is Cytochrome b (MT-CYB).